The chain runs to 124 residues: Testis-expressed protein 54 (124 aa).

Over residues methionine 1 to glutamate 10 the composition is skewed to basic and acidic residues. 2 disordered regions span residues methionine 1–serine 77 and phenylalanine 90–glycine 124. The segment covering methionine 11–threonine 30 has biased composition (acidic residues). Composition is skewed to basic and acidic residues over residues arginine 34–leucine 50 and arginine 101–glycine 124.

As to expression, expressed in Testis.

This chain is Testis-expressed protein 54, found in Homo sapiens (Human).